The primary structure comprises 227 residues: 2-C-methyl-D-erythritol 4-phosphate cytidylyltransferase (227 aa).

This sequence belongs to the IspD/TarI cytidylyltransferase family. IspD subfamily.

The enzyme catalyses 2-C-methyl-D-erythritol 4-phosphate + CTP + H(+) = 4-CDP-2-C-methyl-D-erythritol + diphosphate. Its pathway is isoprenoid biosynthesis; isopentenyl diphosphate biosynthesis via DXP pathway; isopentenyl diphosphate from 1-deoxy-D-xylulose 5-phosphate: step 2/6. Catalyzes the formation of 4-diphosphocytidyl-2-C-methyl-D-erythritol from CTP and 2-C-methyl-D-erythritol 4-phosphate (MEP). In Tolumonas auensis (strain DSM 9187 / NBRC 110442 / TA 4), this protein is 2-C-methyl-D-erythritol 4-phosphate cytidylyltransferase.